Consider the following 231-residue polypeptide: MFTNPIICALDTHDINHALLLTKMLYGRVSMVKLGLEFFTAYGLSGVQAIADCGVPIFLDLKLHDIPNTVSKAISVIASLNVAMLTIHVSGGREMMIRAMDSISGSVTKLVGVTVLTSMDDSDLKEIGVNESPVQQVMLLSKLAREVGLYGIVCSAFEAKEVRNRYTEKDLKLIVPGIRFDSDCNDQKRVKSPKDAMLAGANYLVIGRPITMSSDPVQTVEDILLSISKCI.

Residues D11, K33, 60–69 (DLKLHDIPNT), T117, R179, Q187, G207, and R208 contribute to the substrate site. Catalysis depends on K62, which acts as the Proton donor.

Belongs to the OMP decarboxylase family. Type 1 subfamily. As to quaternary structure, homodimer.

It carries out the reaction orotidine 5'-phosphate + H(+) = UMP + CO2. Its pathway is pyrimidine metabolism; UMP biosynthesis via de novo pathway; UMP from orotate: step 2/2. Its function is as follows. Catalyzes the decarboxylation of orotidine 5'-monophosphate (OMP) to uridine 5'-monophosphate (UMP). The sequence is that of Orotidine 5'-phosphate decarboxylase from Ehrlichia chaffeensis (strain ATCC CRL-10679 / Arkansas).